Consider the following 380-residue polypeptide: 1-deoxy-D-xylulose 5-phosphate reductoisomerase (380 aa).

Positions 10, 11, 12, 13, 35, and 121 each coordinate NADPH. 1-deoxy-D-xylulose 5-phosphate is bound at residue Lys122. Glu123 contributes to the NADPH binding site. Asp147 is a binding site for Mn(2+). Ser148, Glu149, Ser173, and His196 together coordinate 1-deoxy-D-xylulose 5-phosphate. Glu149 contributes to the Mn(2+) binding site. Gly202 is a binding site for NADPH. Ser209, Asn214, Lys215, and Glu218 together coordinate 1-deoxy-D-xylulose 5-phosphate. Residue Glu218 participates in Mn(2+) binding.

The protein belongs to the DXR family. Requires Mg(2+) as cofactor. Mn(2+) is required as a cofactor.

It carries out the reaction 2-C-methyl-D-erythritol 4-phosphate + NADP(+) = 1-deoxy-D-xylulose 5-phosphate + NADPH + H(+). Its pathway is isoprenoid biosynthesis; isopentenyl diphosphate biosynthesis via DXP pathway; isopentenyl diphosphate from 1-deoxy-D-xylulose 5-phosphate: step 1/6. Catalyzes the NADPH-dependent rearrangement and reduction of 1-deoxy-D-xylulose-5-phosphate (DXP) to 2-C-methyl-D-erythritol 4-phosphate (MEP). The polypeptide is 1-deoxy-D-xylulose 5-phosphate reductoisomerase (Lachnospira eligens (strain ATCC 27750 / DSM 3376 / VPI C15-48 / C15-B4) (Eubacterium eligens)).